Consider the following 708-residue polypeptide: Polyribonucleotide nucleotidyltransferase (708 aa).

Mg(2+)-binding residues include Asp488 and Asp494. A KH domain is found at 555-615; sequence PIIKVTKVDP…ENVDKAIELI (61 aa). Residues 625–692 enclose the S1 motif domain; that stretch reads GEVLEGKVTR…DLGRLQFKRV (68 aa).

It belongs to the polyribonucleotide nucleotidyltransferase family. Mg(2+) serves as cofactor.

The protein resides in the cytoplasm. The catalysed reaction is RNA(n+1) + phosphate = RNA(n) + a ribonucleoside 5'-diphosphate. Involved in mRNA degradation. Catalyzes the phosphorolysis of single-stranded polyribonucleotides processively in the 3'- to 5'-direction. The sequence is that of Polyribonucleotide nucleotidyltransferase from Thermotoga petrophila (strain ATCC BAA-488 / DSM 13995 / JCM 10881 / RKU-1).